The following is a 701-amino-acid chain: Glycine--tRNA ligase beta subunit (701 aa).

The protein belongs to the class-II aminoacyl-tRNA synthetase family. As to quaternary structure, tetramer of two alpha and two beta subunits.

It is found in the cytoplasm. The enzyme catalyses tRNA(Gly) + glycine + ATP = glycyl-tRNA(Gly) + AMP + diphosphate. The polypeptide is Glycine--tRNA ligase beta subunit (Anaeromyxobacter dehalogenans (strain 2CP-1 / ATCC BAA-258)).